We begin with the raw amino-acid sequence, 93 residues long: Acylphosphatase (93 aa).

The 89-residue stretch at 5–93 (TAILRVTGFV…EDRKTFDIVY (89 aa)) folds into the Acylphosphatase-like domain. Residues Arg20 and Asn38 contribute to the active site.

This sequence belongs to the acylphosphatase family.

It catalyses the reaction an acyl phosphate + H2O = a carboxylate + phosphate + H(+). The protein is Acylphosphatase (acyP) of Listeria welshimeri serovar 6b (strain ATCC 35897 / DSM 20650 / CCUG 15529 / CIP 8149 / NCTC 11857 / SLCC 5334 / V8).